Reading from the N-terminus, the 134-residue chain is Large ribosomal subunit protein uL14 (134 aa).

It belongs to the universal ribosomal protein uL14 family. In terms of assembly, part of the 50S ribosomal subunit. Forms a cluster with proteins L3 and L19. In the 70S ribosome, L14 and L19 interact and together make contacts with the 16S rRNA in bridges B5 and B8.

Its function is as follows. Binds to 23S rRNA. Forms part of two intersubunit bridges in the 70S ribosome. In Deinococcus deserti (strain DSM 17065 / CIP 109153 / LMG 22923 / VCD115), this protein is Large ribosomal subunit protein uL14.